The following is an 80-amino-acid chain: uncharacterized protein (80 aa).

This is an uncharacterized protein from Methanothermobacter thermautotrophicus (Methanobacterium thermoformicicum).